The sequence spans 75 residues: Large ribosomal subunit protein bL28 (75 aa).

This sequence belongs to the bacterial ribosomal protein bL28 family.

This chain is Large ribosomal subunit protein bL28, found in Buchnera aphidicola subsp. Acyrthosiphon pisum (strain 5A).